The chain runs to 365 residues: tRNA/tmRNA (uracil-C(5))-methyltransferase (365 aa).

Positions 189, 217, 222, 238, and 298 each coordinate S-adenosyl-L-methionine. C323 acts as the Nucleophile in catalysis. E357 (proton acceptor) is an active-site residue.

It belongs to the class I-like SAM-binding methyltransferase superfamily. RNA M5U methyltransferase family. TrmA subfamily.

The enzyme catalyses uridine(54) in tRNA + S-adenosyl-L-methionine = 5-methyluridine(54) in tRNA + S-adenosyl-L-homocysteine + H(+). It catalyses the reaction uridine(341) in tmRNA + S-adenosyl-L-methionine = 5-methyluridine(341) in tmRNA + S-adenosyl-L-homocysteine + H(+). Functionally, dual-specificity methyltransferase that catalyzes the formation of 5-methyluridine at position 54 (m5U54) in all tRNAs, and that of position 341 (m5U341) in tmRNA (transfer-mRNA). The chain is tRNA/tmRNA (uracil-C(5))-methyltransferase from Shewanella frigidimarina (strain NCIMB 400).